The following is an 81-amino-acid chain: Small ribosomal subunit protein uS17 (81 aa).

This sequence belongs to the universal ribosomal protein uS17 family. In terms of assembly, part of the 30S ribosomal subunit.

In terms of biological role, one of the primary rRNA binding proteins, it binds specifically to the 5'-end of 16S ribosomal RNA. This Trichormus variabilis (strain ATCC 29413 / PCC 7937) (Anabaena variabilis) protein is Small ribosomal subunit protein uS17.